Consider the following 286-residue polypeptide: MKILKTIAEVRYYISEERRLGFSIGFVPTMGALHEGHLALVERAKAMCDRVLVSIFVNPKQFGPHEDFAQYPRDLRSDCALLKKAGVECIFAPSVDEMWPAGNDTIVQVEKLSRILMGKLRPGHFCGVTSVVAKLFNIVQPDKAFFGEKDFQQILIIRRMVEDLAFPVEIVGVPILREADGVAHSSRNQFLTLEDRKAAKIIPESGKAAEKLYHEGERSVDKLCKIVRDTLQKETRAIIEAIDLRDMETLCVVKGKLNRPAVLLLTVRFGEVRLIDQYILQEKGGK.

30–37 (MGALHEGH) contributes to the ATP binding site. The active-site Proton donor is the His-37. A (R)-pantoate-binding site is contributed by Gln-61. A beta-alanine-binding site is contributed by Gln-61. 147–150 (GEKD) provides a ligand contact to ATP. Position 153 (Gln-153) interacts with (R)-pantoate. Residues Leu-176 and 184 to 187 (HSSR) each bind ATP.

It belongs to the pantothenate synthetase family. In terms of assembly, homodimer.

It localises to the cytoplasm. It carries out the reaction (R)-pantoate + beta-alanine + ATP = (R)-pantothenate + AMP + diphosphate + H(+). Its pathway is cofactor biosynthesis; (R)-pantothenate biosynthesis; (R)-pantothenate from (R)-pantoate and beta-alanine: step 1/1. Functionally, catalyzes the condensation of pantoate with beta-alanine in an ATP-dependent reaction via a pantoyl-adenylate intermediate. In Bartonella tribocorum (strain CIP 105476 / IBS 506), this protein is Pantothenate synthetase.